A 203-amino-acid polypeptide reads, in one-letter code: E3 ubiquitin-protein ligase RNF152 (203 aa).

An RING-type zinc finger spans residues 12–55; that stretch reads CQICFNYYSPRRRPKLLDCKHTCCSVCLQQMRTSQKDVRCPWCR. The segment at 106–165 is necessary for interaction with RRAGA; the sequence is ISKERALLPGDMGCRLLPGSQQKSVTVVTVPAEQRPLQGGAPQEAVEEEPDRRGVAKSST. The chain crosses the membrane as a helical span at residues 167–187; that stretch reads SGVCTVILVACVLVFLLGIVL.

This sequence belongs to the RNF152 family. As to quaternary structure, interacts with RRAGA (inactive GDP-bound form); stimulated by amino acid starvation. In terms of processing, ubiquitinated. Autoubiquitinated in vitro, leading to its degradation by the proteasome.

It is found in the lysosome membrane. It carries out the reaction S-ubiquitinyl-[E2 ubiquitin-conjugating enzyme]-L-cysteine + [acceptor protein]-L-lysine = [E2 ubiquitin-conjugating enzyme]-L-cysteine + N(6)-ubiquitinyl-[acceptor protein]-L-lysine.. Its pathway is protein modification; protein ubiquitination. Functionally, E3 ubiquitin-protein ligase that acts as a negative regulator of mTORC1 signaling by mediating ubiquitination of RagA/RRAGA and RHEB. Catalyzes 'Lys-63'-linked polyubiquitination of RagA/RRAGA in response to amino acid starvation, thereby regulating mTORC1 signaling. Also mediates monoubiquitination of RHEB, promoting its association with the TSC-TBC complex and subsequent inhibition. Also mediates 'Lys-48'-linked polyubiquitination of target proteins and their subsequent targeting to the proteasome for degradation. Induces apoptosis when overexpressed. This Ailuropoda melanoleuca (Giant panda) protein is E3 ubiquitin-protein ligase RNF152.